The following is a 248-amino-acid chain: tRNA (guanine-N(1)-)-methyltransferase (248 aa).

S-adenosyl-L-methionine contacts are provided by residues Gly117 and 137 to 142; that span reads IGDFVL.

Belongs to the RNA methyltransferase TrmD family. Homodimer.

The protein resides in the cytoplasm. It carries out the reaction guanosine(37) in tRNA + S-adenosyl-L-methionine = N(1)-methylguanosine(37) in tRNA + S-adenosyl-L-homocysteine + H(+). Specifically methylates guanosine-37 in various tRNAs. The polypeptide is tRNA (guanine-N(1)-)-methyltransferase (Polynucleobacter necessarius subsp. necessarius (strain STIR1)).